The chain runs to 930 residues: Translation initiation factor IF-2 (930 aa).

Residues 29-316 (GEFVKSASST…GRKSKRAKRA (288 aa)) are disordered. A compositionally biased stretch (pro residues) spans 81 to 120 (RPGPKPGPPVAQQPAAPAAPPAAPPAPPTPAAAPPSPAPA). Positions 121–135 (APAAATPAEPAAPSA) are enriched in low complexity. Pro residues-rich tracts occupy residues 136 to 155 (RPGPTPGPRPGPSAPKPGAP) and 180 to 191 (PRPQGPGGPRPG). Residues 192 to 204 (PGAGGPRPGGGPR) are compositionally biased toward gly residues. Over residues 228 to 240 (GGGPRPGGGPRPT) the composition is skewed to pro residues. Residues 241–301 (PGGAGRPGGG…GAAGAFGRPG (61 aa)) are compositionally biased toward gly residues. Positions 305–314 (KRGRKSKRAK) are enriched in basic residues. The tr-type G domain occupies 426-598 (IRPPVVTVMG…VILTADASLD (173 aa)). A G1 region spans residues 435–442 (GHVDHGKT). 435–442 (GHVDHGKT) is a binding site for GTP. The G2 stretch occupies residues 460-464 (GITQH). The interval 485-488 (DTPG) is G3. Residues 485–489 (DTPGH) and 539–542 (NKID) contribute to the GTP site. A G4 region spans residues 539-542 (NKID). Residues 575 to 577 (SAK) form a G5 region.

The protein belongs to the TRAFAC class translation factor GTPase superfamily. Classic translation factor GTPase family. IF-2 subfamily.

It is found in the cytoplasm. Its function is as follows. One of the essential components for the initiation of protein synthesis. Protects formylmethionyl-tRNA from spontaneous hydrolysis and promotes its binding to the 30S ribosomal subunits. Also involved in the hydrolysis of GTP during the formation of the 70S ribosomal complex. This chain is Translation initiation factor IF-2, found in Mycolicibacterium vanbaalenii (strain DSM 7251 / JCM 13017 / BCRC 16820 / KCTC 9966 / NRRL B-24157 / PYR-1) (Mycobacterium vanbaalenii).